Here is a 227-residue protein sequence, read N- to C-terminus: PKHD-type hydroxylase BPSS1206 (227 aa).

A Fe2OG dioxygenase domain is found at 78–178 (KVFPPLFNRY…RVASFFWIQS (101 aa)). The Fe cation site is built by His96, Asp98, and His159. A 2-oxoglutarate-binding site is contributed by Arg169.

The cofactor is Fe(2+). It depends on L-ascorbate as a cofactor.

In Burkholderia pseudomallei (strain K96243), this protein is PKHD-type hydroxylase BPSS1206.